Reading from the N-terminus, the 126-residue chain is Small ribosomal subunit protein uS11 (126 aa).

Belongs to the universal ribosomal protein uS11 family. As to quaternary structure, part of the 30S ribosomal subunit. Interacts with proteins S7 and S18. Binds to IF-3.

Functionally, located on the platform of the 30S subunit, it bridges several disparate RNA helices of the 16S rRNA. Forms part of the Shine-Dalgarno cleft in the 70S ribosome. This Desulfotalea psychrophila (strain LSv54 / DSM 12343) protein is Small ribosomal subunit protein uS11.